Here is a 319-residue protein sequence, read N- to C-terminus: Acetyl-coenzyme A carboxylase carboxyl transferase subunit alpha (319 aa).

Residues D35–E296 form the CoA carboxyltransferase C-terminal domain.

The protein belongs to the AccA family. As to quaternary structure, acetyl-CoA carboxylase is a heterohexamer composed of biotin carboxyl carrier protein (AccB), biotin carboxylase (AccC) and two subunits each of ACCase subunit alpha (AccA) and ACCase subunit beta (AccD).

The protein localises to the cytoplasm. The enzyme catalyses N(6)-carboxybiotinyl-L-lysyl-[protein] + acetyl-CoA = N(6)-biotinyl-L-lysyl-[protein] + malonyl-CoA. The protein operates within lipid metabolism; malonyl-CoA biosynthesis; malonyl-CoA from acetyl-CoA: step 1/1. In terms of biological role, component of the acetyl coenzyme A carboxylase (ACC) complex. First, biotin carboxylase catalyzes the carboxylation of biotin on its carrier protein (BCCP) and then the CO(2) group is transferred by the carboxyltransferase to acetyl-CoA to form malonyl-CoA. This Photobacterium profundum (strain SS9) protein is Acetyl-coenzyme A carboxylase carboxyl transferase subunit alpha.